The following is a 147-amino-acid chain: Cyanate hydratase (147 aa).

Catalysis depends on residues Arg88, Glu91, and Ser114.

Belongs to the cyanase family.

The catalysed reaction is cyanate + hydrogencarbonate + 3 H(+) = NH4(+) + 2 CO2. Functionally, catalyzes the reaction of cyanate with bicarbonate to produce ammonia and carbon dioxide. This chain is Cyanate hydratase, found in Thiobacillus denitrificans (strain ATCC 25259 / T1).